Consider the following 471-residue polypeptide: Putative metabolite transport protein YncC (471 aa).

12 helical membrane passes run 13 to 33, 50 to 70, 88 to 108, 111 to 131, 146 to 166, 175 to 195, 256 to 276, 295 to 315, 323 to 343, 358 to 378, 393 to 413, and 416 to 436; these read LIMI…GVIN, VTEG…ALLC, FLFF…IMAV, FLLG…LAEM, LMIV…GVTM, YMLV…LKVP, LLWI…NSIM, IANI…IWLV, ILLI…IFSI, LTVL…WLVI, ISVF…PILL, and VGLS…IGFV.

Belongs to the major facilitator superfamily. Sugar transporter (TC 2.A.1.1) family.

It localises to the cell membrane. The chain is Putative metabolite transport protein YncC (yncC) from Bacillus subtilis (strain 168).